We begin with the raw amino-acid sequence, 208 residues long: Translation initiation factor IF-3 (208 aa).

This sequence belongs to the IF-3 family. In terms of assembly, monomer.

The protein resides in the cytoplasm. Functionally, IF-3 binds to the 30S ribosomal subunit and shifts the equilibrium between 70S ribosomes and their 50S and 30S subunits in favor of the free subunits, thus enhancing the availability of 30S subunits on which protein synthesis initiation begins. The polypeptide is Translation initiation factor IF-3 (Parabacteroides distasonis (strain ATCC 8503 / DSM 20701 / CIP 104284 / JCM 5825 / NCTC 11152)).